A 481-amino-acid chain; its full sequence is Tagaturonate/fructuronate epimerase (481 aa).

The active-site Proton acceptor is D161. H162 contributes to the a divalent metal cation binding site. Residue E266 is the Proton donor of the active site. Residues K308 and H341 each contribute to the a divalent metal cation site.

It belongs to the UxaE family. Requires a divalent metal cation as cofactor.

It catalyses the reaction keto-D-tagaturonate = keto-D-fructuronate. Its function is as follows. Catalyzes the epimerization of D-tagaturonate (D-TagA) to D-fructuronate (D-FruA). In Thermotoga maritima (strain ATCC 43589 / DSM 3109 / JCM 10099 / NBRC 100826 / MSB8), this protein is Tagaturonate/fructuronate epimerase.